Consider the following 303-residue polypeptide: Protoheme IX farnesyltransferase (303 aa).

9 helical membrane-spanning segments follow: residues 30 to 50 (VMSL…STVS), 54 to 74 (AMIA…LNMW), 101 to 121 (ALIF…YFAN), 123 to 143 (ISAV…TIWL), 150 to 170 (NIVI…TIAT), 178 to 198 (ITFF…LSLY), 219 to 241 (STKI…PYAI), 245 to 262 (GLVF…YNIL), and 279 to 299 (AKTI…IFLI).

The protein belongs to the UbiA prenyltransferase family. Protoheme IX farnesyltransferase subfamily.

The protein resides in the cell inner membrane. The catalysed reaction is heme b + (2E,6E)-farnesyl diphosphate + H2O = Fe(II)-heme o + diphosphate. Its pathway is porphyrin-containing compound metabolism; heme O biosynthesis; heme O from protoheme: step 1/1. Converts heme B (protoheme IX) to heme O by substitution of the vinyl group on carbon 2 of heme B porphyrin ring with a hydroxyethyl farnesyl side group. This chain is Protoheme IX farnesyltransferase, found in Pelagibacter ubique (strain HTCC1062).